Reading from the N-terminus, the 92-residue chain is YcgL domain-containing protein VC_1957 (92 aa).

Positions 1-84 (MLCSIYKSPK…PPENLLEQHK (84 aa)) constitute a YcgL domain. The segment at 69–92 (FLQLPPPPENLLEQHKERKARQTP) is disordered.

This chain is YcgL domain-containing protein VC_1957, found in Vibrio cholerae serotype O1 (strain ATCC 39315 / El Tor Inaba N16961).